Consider the following 349-residue polypeptide: tRNA pseudouridine synthase D (349 aa).

A substrate-binding site is contributed by Phe-27. The Nucleophile role is filled by Asp-80. Asn-129 is a substrate binding site. Positions 155–303 constitute a TRUD domain; the sequence is GVPNYFGAQR…VEAARRAMLL (149 aa). Phe-329 contributes to the substrate binding site.

This sequence belongs to the pseudouridine synthase TruD family.

It carries out the reaction uridine(13) in tRNA = pseudouridine(13) in tRNA. Functionally, responsible for synthesis of pseudouridine from uracil-13 in transfer RNAs. The sequence is that of tRNA pseudouridine synthase D from Escherichia coli O6:K15:H31 (strain 536 / UPEC).